Reading from the N-terminus, the 110-residue chain is Putative UPF0377 protein YIR040C (110 aa).

It belongs to the UPF0377 family.

The chain is Putative UPF0377 protein YIR040C from Saccharomyces cerevisiae (strain ATCC 204508 / S288c) (Baker's yeast).